Consider the following 376-residue polypeptide: Lateral eye opsin (376 aa).

Over 1–46 (MANQLSYSSLGWPYQPNASVVDTMPKEMLYMIHEHWYAFPPMNPLW) the chain is Extracellular. The N-linked (GlcNAc...) asparagine glycan is linked to N17. A helical transmembrane segment spans residues 47–71 (YSILGVAMIILGIICVLGNGMVIYL). Topologically, residues 72–83 (MMTTKSLRTPTN) are cytoplasmic. Residues 84–108 (LLVVNLAFSDFCMMAFMMPTMTSNC) traverse the membrane as a helical segment. The Extracellular segment spans residues 109-123 (FAETWILGPFMCEVY). C120 and C197 form a disulfide bridge. Residues 124-143 (GMAGSLFGCASIWSMVMITL) traverse the membrane as a helical segment. Residues 144–162 (DRYNVIVRGMAAAPLTHKK) lie on the Cytoplasmic side of the membrane. Residues 163–186 (ATLLLLFVWIWSGGWTILPFFGWS) traverse the membrane as a helical segment. The Extracellular portion of the chain corresponds to 187–210 (RYVPEGNLTSCTVDYLTKDWSSAS). N-linked (GlcNAc...) asparagine glycosylation is present at N193. Residues 211 to 238 (YVVIYGLAVYFLPLITMIYCYFFIVHAV) traverse the membrane as a helical segment. Residues 239-274 (AEHEKQLREQAKKMNVASLRANADQQKQSAECRLAK) lie on the Cytoplasmic side of the membrane. A helical membrane pass occupies residues 275-298 (VAMMTVGLWFMAWTPYLIISWAGV). Over 299 to 306 (FSSGTRLT) the chain is Extracellular. A helical transmembrane segment spans residues 307 to 331 (PLATIWGSVFAKANSCYNPIVYGIS). K318 carries the post-translational modification N6-(retinylidene)lysine. At 332-376 (HPRYKAALYQRFPSLACGSGESGSDVKSEASATTTMEEKPKIPEA) the chain is on the cytoplasmic side. Residues 349–376 (GSGESGSDVKSEASATTTMEEKPKIPEA) form a disordered region. The span at 367–376 (MEEKPKIPEA) shows a compositional bias: basic and acidic residues.

It belongs to the G-protein coupled receptor 1 family. Opsin subfamily. Phosphorylated on some or all of the serine and threonine residues present in the C-terminal region. As to expression, lateral eye.

It is found in the membrane. Its function is as follows. Visual pigments are the light-absorbing molecules that mediate vision. They consist of an apoprotein, opsin, covalently linked to cis-retinal. In Limulus polyphemus (Atlantic horseshoe crab), this protein is Lateral eye opsin.